Consider the following 376-residue polypeptide: Alcohol dehydrogenase 1 (376 aa).

At serine 2 the chain carries N-acetylserine. Zn(2+) is bound by residues cysteine 47, histidine 68, cysteine 98, cysteine 101, cysteine 104, cysteine 112, and cysteine 176. NAD(+)-binding positions include glycine 201 to glycine 206, aspartate 225, and lysine 230. N6-succinyllysine is present on lysine 235. Valine 294–valine 296 serves as a coordination point for NAD(+). At lysine 341 the chain carries N6-succinyllysine. Residue arginine 371 coordinates NAD(+).

This sequence belongs to the zinc-containing alcohol dehydrogenase family. Class-I subfamily. In terms of assembly, dimer of identical or non-identical chains of three types (A, B, C), which are coded by 3 separate genes at different loci. It depends on Zn(2+) as a cofactor.

It localises to the cytoplasm. It catalyses the reaction a primary alcohol + NAD(+) = an aldehyde + NADH + H(+). The catalysed reaction is a secondary alcohol + NAD(+) = a ketone + NADH + H(+). This is Alcohol dehydrogenase 1 (Adh1) from Rattus norvegicus (Rat).